The following is a 345-amino-acid chain: Phosphoribosylformylglycinamidine cyclo-ligase (345 aa).

Belongs to the AIR synthase family.

It localises to the cytoplasm. The enzyme catalyses 2-formamido-N(1)-(5-O-phospho-beta-D-ribosyl)acetamidine + ATP = 5-amino-1-(5-phospho-beta-D-ribosyl)imidazole + ADP + phosphate + H(+). The protein operates within purine metabolism; IMP biosynthesis via de novo pathway; 5-amino-1-(5-phospho-D-ribosyl)imidazole from N(2)-formyl-N(1)-(5-phospho-D-ribosyl)glycinamide: step 2/2. The sequence is that of Phosphoribosylformylglycinamidine cyclo-ligase from Shewanella putrefaciens (strain CN-32 / ATCC BAA-453).